A 270-amino-acid chain; its full sequence is Glucosamine-6-phosphate deaminase (270 aa).

The active-site Proton acceptor; for enolization step is aspartate 72. Catalysis depends on aspartate 141, which acts as the For ring-opening step. Residue histidine 143 is the Proton acceptor; for ring-opening step of the active site. Glutamate 148 acts as the For ring-opening step in catalysis.

It belongs to the glucosamine/galactosamine-6-phosphate isomerase family. NagB subfamily.

The catalysed reaction is alpha-D-glucosamine 6-phosphate + H2O = beta-D-fructose 6-phosphate + NH4(+). Its pathway is amino-sugar metabolism; N-acetylneuraminate degradation; D-fructose 6-phosphate from N-acetylneuraminate: step 5/5. Its activity is regulated as follows. Allosterically activated by N-acetylglucosamine 6-phosphate (GlcNAc6P). Its function is as follows. Catalyzes the reversible isomerization-deamination of glucosamine 6-phosphate (GlcN6P) to form fructose 6-phosphate (Fru6P) and ammonium ion. The chain is Glucosamine-6-phosphate deaminase from Parabacteroides distasonis (strain ATCC 8503 / DSM 20701 / CIP 104284 / JCM 5825 / NCTC 11152).